We begin with the raw amino-acid sequence, 501 residues long: MSTANNNQPESISMNAFKQPKAFYLIFSIELWERFGYYGLQGIMAVYLVKMLGMSEADSITLFSSFSALVYGFVAIGGWLGDKVLGAKRVIVLGALTLAVGYSMIAYSGHEIFWVYLGMATIAVGNGLFKANPSSLLSTCYSKDDPRLDGAFTMYYMSINIGSFFSMLATPWLAAKYGWSVAFSLSVVGMLITLVNFWFCRKWVKNQGSKPDFLPLQFKKLLMVLVGIIALITLSNWLLHNQIIARWALALVSLGIIFIFTKETLFLQGIARRRMIVAFLLMLEAVIFFVLYSQMPTSLNFFAIHNVEHSIFGIGFEPEQFQALNPFWIMLASPILAAIYNKMGDRLPMPHKFAFGMMLCSAAFLVLPWGASFANEHGIVSVNWLILSYALQSIGELMISGLGLAMVAQLVPQRLMGFIMGSWFLTTAAAALIAGKVAALTAVPSDAITDAHASLAIYSHVFMQIGIVTAIIAVLMMLTAPKLYRMTLAPSDHNDVKIMTQ.

Residues 1–34 (MSTANNNQPESISMNAFKQPKAFYLIFSIELWER) are Cytoplasmic-facing. The helical transmembrane segment at 35–55 (FGYYGLQGIMAVYLVKMLGMS) threads the bilayer. Over 56 to 59 (EADS) the chain is Periplasmic. The chain crosses the membrane as a helical span at residues 60 to 80 (ITLFSSFSALVYGFVAIGGWL). At 81-89 (GDKVLGAKR) the chain is on the cytoplasmic side. 2 helical membrane passes run 90–110 (VIVL…YSGH) and 111–131 (EIFW…LFKA). The Periplasmic segment spans residues 132–153 (NPSSLLSTCYSKDDPRLDGAFT). A helical transmembrane segment spans residues 154 to 174 (MYYMSINIGSFFSMLATPWLA). Residues 175-178 (AKYG) are Cytoplasmic-facing. Residues 179–199 (WSVAFSLSVVGMLITLVNFWF) form a helical membrane-spanning segment. Over 200–220 (CRKWVKNQGSKPDFLPLQFKK) the chain is Periplasmic. The chain crosses the membrane as a helical span at residues 221–241 (LLMVLVGIIALITLSNWLLHN). Topologically, residues 242-246 (QIIAR) are cytoplasmic. Residues 247 to 267 (WALALVSLGIIFIFTKETLFL) traverse the membrane as a helical segment. At 268–274 (QGIARRR) the chain is on the periplasmic side. The helical transmembrane segment at 275–295 (MIVAFLLMLEAVIFFVLYSQM) threads the bilayer. Residues 296 to 320 (PTSLNFFAIHNVEHSIFGIGFEPEQ) lie on the Cytoplasmic side of the membrane. The chain crosses the membrane as a helical span at residues 321-341 (FQALNPFWIMLASPILAAIYN). Residues 342-352 (KMGDRLPMPHK) are Periplasmic-facing. Residues 353-373 (FAFGMMLCSAAFLVLPWGASF) traverse the membrane as a helical segment. Residues 374–383 (ANEHGIVSVN) lie on the Cytoplasmic side of the membrane. The chain crosses the membrane as a helical span at residues 384 to 404 (WLILSYALQSIGELMISGLGL). At 405–414 (AMVAQLVPQR) the chain is on the periplasmic side. A helical membrane pass occupies residues 415 to 435 (LMGFIMGSWFLTTAAAALIAG). Over 436–460 (KVAALTAVPSDAITDAHASLAIYSH) the chain is Cytoplasmic. The helical transmembrane segment at 461-481 (VFMQIGIVTAIIAVLMMLTAP) threads the bilayer. At 482–501 (KLYRMTLAPSDHNDVKIMTQ) the chain is on the periplasmic side.

The protein belongs to the major facilitator superfamily. Proton-dependent oligopeptide transporter (POT/PTR) (TC 2.A.17) family. DtpA subfamily.

It is found in the cell inner membrane. Functionally, proton-dependent permease that transports di- and tripeptides. The sequence is that of Dipeptide and tripeptide permease A from Yersinia pestis.